We begin with the raw amino-acid sequence, 388 residues long: MNLHEYQGKQLFAEYGLPVSKGIACDTPKEAVAAADEIGGDGWVVKAQVHAGGRGKAGGVKLVKSKEEIREFAEKWLGKNLVTYQTDENGQPVSKILVESLTDIDQELYLGAVVDRGSRRIVFMASTEGGVEIEKVAEETPEKILKAEIDPLVGAQPYQGRELAFKLGLEGKQIGQFTKIFLGLAKLFEECDLALVEINPLVITPAGDLHCLDAKVGVDGNALYRQKKIHEMHDPSQEDSREAEAAKWELNYVALEGNIGCMVNGAGLAMGTMDIIKLSGGQPANFLDVGGGATKERVSEAFKIILSDDAVQAVLVNIFGGIVRCDMIAEGIIGAVKEVGVKVPVVVRLEGNNAELGTKVLAESGLNIIAATSLADAAEQVVKAAGGK.

Residues 9-244 (KQLFAEYGLP…PSQEDSREAE (236 aa)) form the ATP-grasp domain. ATP is bound by residues Lys-46, 53-55 (GRG), Glu-99, Thr-102, and Glu-107. Mg(2+) contacts are provided by Asn-199 and Asp-213. Substrate contacts are provided by residues Asn-264 and 321–323 (GIV).

This sequence belongs to the succinate/malate CoA ligase beta subunit family. In terms of assembly, heterotetramer of two alpha and two beta subunits. Mg(2+) is required as a cofactor.

The enzyme catalyses succinate + ATP + CoA = succinyl-CoA + ADP + phosphate. The catalysed reaction is GTP + succinate + CoA = succinyl-CoA + GDP + phosphate. It participates in carbohydrate metabolism; tricarboxylic acid cycle; succinate from succinyl-CoA (ligase route): step 1/1. In terms of biological role, succinyl-CoA synthetase functions in the citric acid cycle (TCA), coupling the hydrolysis of succinyl-CoA to the synthesis of either ATP or GTP and thus represents the only step of substrate-level phosphorylation in the TCA. The beta subunit provides nucleotide specificity of the enzyme and binds the substrate succinate, while the binding sites for coenzyme A and phosphate are found in the alpha subunit. The protein is Succinate--CoA ligase [ADP-forming] subunit beta of Marinobacter nauticus (strain ATCC 700491 / DSM 11845 / VT8) (Marinobacter aquaeolei).